Consider the following 47-residue polypeptide: Diuretic hormone 2 (47 aa).

This sequence belongs to the sauvagine/corticotropin-releasing factor/urotensin I family.

The protein resides in the secreted. In terms of biological role, stimulates fluid secretion by the Malpighian tubules. Increases cyclic AMP production in Malpighian tubules. In Tenebrio molitor (Yellow mealworm beetle), this protein is Diuretic hormone 2.